The sequence spans 521 residues: MKLLSNSLMFLPLLALALTAVSSLKYSRNDFPPGFVFGSGTSAYQVEGAADEDGRTPSIWDVFAHAGHSGVAAGNVACDQYHKYKEDVKLMADMGLEAYRFSISWSRLLPSGRGPINPKGLQYYNNLIDELITHGIQPHVTLHHFDLPQALEDEYGGWLSQEIVRDFTAYADTCFKEFGDRVSHWTTINEVNVFALGGYDQGITPPARCSPPFGLNCTKGNSSIEPYIAVHNMLLAHASATILYKQQYKVLLSASLPSSICIAFCYVLFITQYKQHGSVGISVYTYGAVPLTNSVKDKQATARVNDFYIGWILHPLVFGDYPETMKTNVGSRLPAFTEEESEQVKGAFDFVGVINYMALYVKDNSSSLKPNLQDFNTDIAVEMTLVGNTSIENEYANTPWSLQQILLYVKETYGNPPVYILENGQMTPHSSSLVDTTRVKYLSSYIKAVLHSLSRKGSDVKGYFQWSLMDVFELFGGYERSFGLLYVDFKDPSLKRSPKLSAHWYSSFLKGTLHHPSYASS.

Positions 1 to 23 are cleaved as a signal peptide; sequence MKLLSNSLMFLPLLALALTAVSS. Residues Gln-45, His-144, and 189 to 190 contribute to the a beta-D-glucoside site; that span reads NE. Catalysis depends on Glu-190, which acts as the Proton donor. A disulfide bridge connects residues Cys-209 and Cys-217. 2 N-linked (GlcNAc...) asparagine glycosylation sites follow: Asn-216 and Asn-221. Position 356 (Tyr-356) interacts with a beta-D-glucoside. N-linked (GlcNAc...) asparagine glycosylation is found at Asn-364 and Asn-388. A beta-D-glucoside is bound by residues Glu-422, Trp-466, and Phe-482. Glu-422 acts as the Nucleophile in catalysis.

The protein belongs to the glycosyl hydrolase 1 family.

It carries out the reaction Hydrolysis of terminal, non-reducing beta-D-glucosyl residues with release of beta-D-glucose.. The sequence is that of Beta-glucosidase 11 from Arabidopsis thaliana (Mouse-ear cress).